We begin with the raw amino-acid sequence, 257 residues long: Triosephosphate isomerase (257 aa).

9-11 (NWK) is a binding site for substrate. Residue H95 is the Electrophile of the active site. Residue E168 is the Proton acceptor of the active site. Residues G174, S213, and 234 to 235 (GG) each bind substrate.

This sequence belongs to the triosephosphate isomerase family. In terms of assembly, homodimer.

The protein resides in the cytoplasm. The enzyme catalyses D-glyceraldehyde 3-phosphate = dihydroxyacetone phosphate. The protein operates within carbohydrate biosynthesis; gluconeogenesis. Its pathway is carbohydrate degradation; glycolysis; D-glyceraldehyde 3-phosphate from glycerone phosphate: step 1/1. Involved in the gluconeogenesis. Catalyzes stereospecifically the conversion of dihydroxyacetone phosphate (DHAP) to D-glyceraldehyde-3-phosphate (G3P). This is Triosephosphate isomerase from Acidithiobacillus ferrooxidans (strain ATCC 23270 / DSM 14882 / CIP 104768 / NCIMB 8455) (Ferrobacillus ferrooxidans (strain ATCC 23270)).